The following is a 592-amino-acid chain: V-type ATP synthase alpha chain 1 (592 aa).

233–240 contributes to the ATP binding site; it reads GPFGSGKT.

The protein belongs to the ATPase alpha/beta chains family.

The catalysed reaction is ATP + H2O + 4 H(+)(in) = ADP + phosphate + 5 H(+)(out). In terms of biological role, produces ATP from ADP in the presence of a proton gradient across the membrane. The V-type alpha chain is a catalytic subunit. This Clostridium tetani (strain Massachusetts / E88) protein is V-type ATP synthase alpha chain 1.